Here is a 685-residue protein sequence, read N- to C-terminus: DNA-directed RNA polymerase subunit beta' (685 aa).

Residues C69, C71, C87, and C90 each contribute to the Zn(2+) site. D489, D491, and D493 together coordinate Mg(2+).

Belongs to the RNA polymerase beta' chain family. RpoC1 subfamily. In terms of assembly, in plastids the minimal PEP RNA polymerase catalytic core is composed of four subunits: alpha, beta, beta', and beta''. When a (nuclear-encoded) sigma factor is associated with the core the holoenzyme is formed, which can initiate transcription. Requires Mg(2+) as cofactor. It depends on Zn(2+) as a cofactor.

The protein localises to the plastid. It is found in the chloroplast. The catalysed reaction is RNA(n) + a ribonucleoside 5'-triphosphate = RNA(n+1) + diphosphate. DNA-dependent RNA polymerase catalyzes the transcription of DNA into RNA using the four ribonucleoside triphosphates as substrates. The sequence is that of DNA-directed RNA polymerase subunit beta' from Gossypium hirsutum (Upland cotton).